The chain runs to 226 residues: Phosphoribosylformylglycinamidine synthase subunit PurQ (226 aa).

The Glutamine amidotransferase type-1 domain maps to 2 to 226 (KIAVIVFPGS…LENGTVIAEG (225 aa)). Residue C86 is the Nucleophile of the active site. Catalysis depends on residues H195 and E197.

As to quaternary structure, part of the FGAM synthase complex composed of 1 PurL, 1 PurQ and 2 PurS subunits.

Its subcellular location is the cytoplasm. It catalyses the reaction N(2)-formyl-N(1)-(5-phospho-beta-D-ribosyl)glycinamide + L-glutamine + ATP + H2O = 2-formamido-N(1)-(5-O-phospho-beta-D-ribosyl)acetamidine + L-glutamate + ADP + phosphate + H(+). It carries out the reaction L-glutamine + H2O = L-glutamate + NH4(+). Its pathway is purine metabolism; IMP biosynthesis via de novo pathway; 5-amino-1-(5-phospho-D-ribosyl)imidazole from N(2)-formyl-N(1)-(5-phospho-D-ribosyl)glycinamide: step 1/2. Its function is as follows. Part of the phosphoribosylformylglycinamidine synthase complex involved in the purines biosynthetic pathway. Catalyzes the ATP-dependent conversion of formylglycinamide ribonucleotide (FGAR) and glutamine to yield formylglycinamidine ribonucleotide (FGAM) and glutamate. The FGAM synthase complex is composed of three subunits. PurQ produces an ammonia molecule by converting glutamine to glutamate. PurL transfers the ammonia molecule to FGAR to form FGAM in an ATP-dependent manner. PurS interacts with PurQ and PurL and is thought to assist in the transfer of the ammonia molecule from PurQ to PurL. This is Phosphoribosylformylglycinamidine synthase subunit PurQ from Limosilactobacillus fermentum (strain NBRC 3956 / LMG 18251) (Lactobacillus fermentum).